The following is a 205-amino-acid chain: LexA repressor (205 aa).

A DNA-binding region (H-T-H motif) is located at residues 29–49 (IRDICKATGLRSSSTVYNYLN). Residues S128 and K165 each act as for autocatalytic cleavage activity in the active site.

This sequence belongs to the peptidase S24 family. Homodimer.

It carries out the reaction Hydrolysis of Ala-|-Gly bond in repressor LexA.. Its function is as follows. Represses a number of genes involved in the response to DNA damage (SOS response), including recA and lexA. In the presence of single-stranded DNA, RecA interacts with LexA causing an autocatalytic cleavage which disrupts the DNA-binding part of LexA, leading to derepression of the SOS regulon and eventually DNA repair. In Moorella thermoacetica (strain ATCC 39073 / JCM 9320), this protein is LexA repressor.